We begin with the raw amino-acid sequence, 172 residues long: Type IV secretion system putative outer membrane lipoprotein BMEII0036 (172 aa).

Positions 1–15 are cleaved as a signal peptide; it reads MRTLVMVACAVSLAA. C16 is lipidated: N-palmitoyl cysteine. C16 is lipidated: S-diacylglycerol cysteine. The OmpA-like domain occupies 58–172; that stretch reads WPARPPKQTV…RRVDIEILRK (115 aa).

It localises to the cell outer membrane. The polypeptide is Type IV secretion system putative outer membrane lipoprotein BMEII0036 (Brucella melitensis biotype 1 (strain ATCC 23456 / CCUG 17765 / NCTC 10094 / 16M)).